The chain runs to 516 residues: D-aminopeptidase (516 aa).

The Nucleophile role is filled by Ser-61. Catalysis depends on Lys-64, which acts as the Proton donor/acceptor. The important for specificity stretch occupies residues 476 to 486; the sequence is RRSMDAPAPGD. Asp-480 is a substrate binding site.

This sequence belongs to the peptidase S12 family. In terms of assembly, homodimer.

It catalyses the reaction Release of an N-terminal D-amino acid from a peptide, Xaa-|-Yaa-, in which Xaa is preferably D-Ala, D-Ser or D-Thr. D-amino acid amides and methyl esters also are hydrolyzed, as is glycine amide.. Its activity is regulated as follows. Inhibited by beta-lactam compounds such as 6-aminopenicillic acid, 7-aminocephalosporanic acid, benzylpenicillin and ampicillin. Inhibited by p-chloromercuribenzoate. In terms of biological role, hydrolyzes N-terminal residues in D-amino acid-containing peptides. The protein is D-aminopeptidase of Cereibacter sphaeroides (strain ATCC 17029 / ATH 2.4.9) (Rhodobacter sphaeroides).